A 388-amino-acid polypeptide reads, in one-letter code: Probable peptidoglycan glycosyltransferase FtsW (388 aa).

At 1 to 19 (MMSPSTSAPHNQPIQPELD) the chain is on the cytoplasmic side. A helical membrane pass occupies residues 20-40 (VLLVSTVLLLLGLGLVMVYSA). Residues 41-55 (SIAIAEAKFGEGSSY) lie on the Periplasmic side of the membrane. Residues 56–76 (YFLARQASYILAGIAVGIGCF) form a helical membrane-spanning segment. Topologically, residues 77 to 89 (RIPLRWWQAYSHY) are cytoplasmic. The chain crosses the membrane as a helical span at residues 90–110 (LLGLGILLLLVVLIPGISHEI). The Periplasmic portion of the chain corresponds to 111 to 116 (NGSRRW). The helical transmembrane segment at 117–137 (IPLGITSFQPSELMKLIILIF) threads the bilayer. Residues 138-151 (TADYVVRKAAFKDH) lie on the Cytoplasmic side of the membrane. Residues 152–172 (FFKGFLPILALLTIVSLLLLM) form a helical membrane-spanning segment. Topologically, residues 173 to 175 (EPD) are periplasmic. 2 helical membrane-spanning segments follow: residues 176-196 (LGATVVIAAIVLSIMFMNGMS) and 197-217 (LKMFFGLICLVPVLLALLIII). At 218-284 (EPYRMDRINA…DFMFAVLAEE (67 aa)) the chain is on the periplasmic side. A helical membrane pass occupies residues 285–305 (LGFAGVVTVISLFFFLLVRIF). Over 306-324 (KVGRTAARLGDQFGSLVAQ) the chain is Cytoplasmic. The helical transmembrane segment at 325 to 345 (GIGVWLGLQAFINMGVNMGLL) threads the bilayer. Over 346–351 (PTKGLT) the chain is Periplasmic. A helical transmembrane segment spans residues 352 to 372 (LPFMSYGGSSIVINSIAIAIL). Residues 373 to 388 (LRIDWENRLKRRGLNA) are Cytoplasmic-facing.

Belongs to the SEDS family. FtsW subfamily.

Its subcellular location is the cell inner membrane. It catalyses the reaction [GlcNAc-(1-&gt;4)-Mur2Ac(oyl-L-Ala-gamma-D-Glu-L-Lys-D-Ala-D-Ala)](n)-di-trans,octa-cis-undecaprenyl diphosphate + beta-D-GlcNAc-(1-&gt;4)-Mur2Ac(oyl-L-Ala-gamma-D-Glu-L-Lys-D-Ala-D-Ala)-di-trans,octa-cis-undecaprenyl diphosphate = [GlcNAc-(1-&gt;4)-Mur2Ac(oyl-L-Ala-gamma-D-Glu-L-Lys-D-Ala-D-Ala)](n+1)-di-trans,octa-cis-undecaprenyl diphosphate + di-trans,octa-cis-undecaprenyl diphosphate + H(+). The protein operates within cell wall biogenesis; peptidoglycan biosynthesis. Functionally, peptidoglycan polymerase that is essential for cell division. The chain is Probable peptidoglycan glycosyltransferase FtsW from Nitrosomonas europaea (strain ATCC 19718 / CIP 103999 / KCTC 2705 / NBRC 14298).